Consider the following 248-residue polypeptide: UDP-2,3-diacylglucosamine hydrolase (248 aa).

Mn(2+)-binding residues include D8, H10, D41, N79, and H114. A substrate-binding site is contributed by 79 to 80 (NR). Residues D122, N164, R167, and H195 each contribute to the substrate site. Mn(2+)-binding residues include H195 and H197.

This sequence belongs to the LpxH family. Mn(2+) serves as cofactor.

Its subcellular location is the cell inner membrane. It carries out the reaction UDP-2-N,3-O-bis[(3R)-3-hydroxytetradecanoyl]-alpha-D-glucosamine + H2O = 2-N,3-O-bis[(3R)-3-hydroxytetradecanoyl]-alpha-D-glucosaminyl 1-phosphate + UMP + 2 H(+). It functions in the pathway glycolipid biosynthesis; lipid IV(A) biosynthesis; lipid IV(A) from (3R)-3-hydroxytetradecanoyl-[acyl-carrier-protein] and UDP-N-acetyl-alpha-D-glucosamine: step 4/6. Its function is as follows. Hydrolyzes the pyrophosphate bond of UDP-2,3-diacylglucosamine to yield 2,3-diacylglucosamine 1-phosphate (lipid X) and UMP by catalyzing the attack of water at the alpha-P atom. Involved in the biosynthesis of lipid A, a phosphorylated glycolipid that anchors the lipopolysaccharide to the outer membrane of the cell. The polypeptide is UDP-2,3-diacylglucosamine hydrolase (Wigglesworthia glossinidia brevipalpis).